The chain runs to 98 residues: Small ribosomal subunit protein bS20 (98 aa).

It belongs to the bacterial ribosomal protein bS20 family.

Binds directly to 16S ribosomal RNA. This is Small ribosomal subunit protein bS20 from Kosmotoga olearia (strain ATCC BAA-1733 / DSM 21960 / TBF 19.5.1).